The following is a 253-amino-acid chain: Beta-crystallin B1 (253 aa).

A compositionally biased stretch (low complexity) spans 1–18 (MSQPAAKASATAAVNPGP). The segment at 1–53 (MSQPAAKASATAAVNPGPDGKGKAGPPPGPAPGSGPAPAPAPAPAQPAPAAKA) is disordered. Position 2 is an N-acetylserine (Ser-2). The tract at residues 2–59 (SQPAAKASATAAVNPGPDGKGKAGPPPGPAPGSGPAPAPAPAPAQPAPAAKAELPPGS) is N-terminal arm. The span at 25–47 (GPPPGPAPGSGPAPAPAPAPAQP) shows a compositional bias: pro residues. Beta/gamma crystallin 'Greek key' domains lie at 60–99 (YKLVVFEQENFQGRRVEFSGECLNLGDRGFERVRSIIVTS) and 100–144 (GPWV…RPIK). The connecting peptide stretch occupies residues 145–149 (MDAQE). Beta/gamma crystallin 'Greek key' domains lie at 150 to 191 (HKLC…RVSS) and 192 to 234 (GTWV…RRLR). Residues 236–253 (RQWHREGCFPVLAAEPPK) are C-terminal arm.

It belongs to the beta/gamma-crystallin family. As to quaternary structure, homo/heterodimer, or complexes of higher-order. The structure of beta-crystallin oligomers seems to be stabilized through interactions between the N-terminal arms. Post-translationally, specific cleavages in the N-terminal arm occur during lens maturation and give rise to truncated forms, leading to impaired oligomerization and protein insolubilization.

Crystallins are the dominant structural components of the vertebrate eye lens. The chain is Beta-crystallin B1 (CRYBB1) from Bos taurus (Bovine).